Consider the following 198-residue polypeptide: WYSSMFAANIKQEPISHHHHHHHAHHSHHQHPHDSNSNSNASSPHQSPLPSPNPPSNTNLQLEQYLKQQQQQQQQQQQQQQQQPMDTLCAAAMTPSPSNNDQNSPLMLPGLPNPMQSIMLANLRPSPTTTTTTTTPAAAPTTTAATIALQANDKLQALTPPMDVTPPKSPAKSQQSCAEPEKEHDLMSNSSEDMKYMA.

2 disordered regions span residues 16–111 and 152–198; these read SHHH…LPGL and NDKL…KYMA. A compositionally biased stretch (basic residues) spans 17-31; that stretch reads HHHHHHHAHHSHHQH. 2 stretches are compositionally biased toward low complexity: residues 35–46 and 56–83; these read SNSNSNASSPHQ and SNTN…QQQQ. The segment covering 95 to 105 has biased composition (polar residues); the sequence is PSPSNNDQNSP. The segment covering 179 to 198 has biased composition (basic and acidic residues); that stretch reads EPEKEHDLMSNSSEDMKYMA.

The protein belongs to the hunchback C2H2-type zinc-finger protein family.

The protein resides in the nucleus. In terms of biological role, gap class segmentation protein that controls development of head structures. The chain is Protein hunchback (hb) from Drosophila lineosetae (Fruit fly).